The following is a 429-amino-acid chain: Argininosuccinate lyase (429 aa).

It belongs to the lyase 1 family. Argininosuccinate lyase subfamily.

Its subcellular location is the cytoplasm. The enzyme catalyses 2-(N(omega)-L-arginino)succinate = fumarate + L-arginine. The protein operates within amino-acid biosynthesis; L-arginine biosynthesis; L-arginine from L-ornithine and carbamoyl phosphate: step 3/3. This Pyrobaculum calidifontis (strain DSM 21063 / JCM 11548 / VA1) protein is Argininosuccinate lyase.